Reading from the N-terminus, the 159-residue chain is Ribosomal RNA large subunit methyltransferase H (159 aa).

S-adenosyl-L-methionine-binding positions include leucine 76, glycine 108, and 127–132; that span reads FSKMTF.

The protein belongs to the RNA methyltransferase RlmH family. Homodimer.

It localises to the cytoplasm. The enzyme catalyses pseudouridine(1915) in 23S rRNA + S-adenosyl-L-methionine = N(3)-methylpseudouridine(1915) in 23S rRNA + S-adenosyl-L-homocysteine + H(+). Its function is as follows. Specifically methylates the pseudouridine at position 1915 (m3Psi1915) in 23S rRNA. This Geobacillus kaustophilus (strain HTA426) protein is Ribosomal RNA large subunit methyltransferase H.